We begin with the raw amino-acid sequence, 81 residues long: Adipogenin (81 aa).

The helical transmembrane segment at 16 to 36 (FLVFWLCLPVALLLFLLIIWL) threads the bilayer.

This sequence belongs to the adipogenin family. Highly expressed in subcutaneous, perirenal and mesecentric adipose tissue.

The protein resides in the membrane. The protein localises to the nucleus. Plays a role in stimulating adipocyte differentiation and development. The protein is Adipogenin of Bos taurus (Bovine).